Reading from the N-terminus, the 353-residue chain is D-glycerol 3-phosphate phosphatase (353 aa).

Asp14 (nucleophile) is an active-site residue. 3 residues coordinate Mg(2+): Asp14, Asp16, and Asp209. Catalysis depends on Asp16, which acts as the Proton donor.

Belongs to the HAD-like hydrolase superfamily. As to quaternary structure, homodimer. It depends on Mg(2+) as a cofactor. Requires Co(2+) as cofactor. The cofactor is Mn(2+).

It catalyses the reaction sn-glycerol 1-phosphate + H2O = glycerol + phosphate. It participates in glycerolipid metabolism. Dephosphorylates D-glycerol 3-phosphate (sn-glycerol 1-phosphate). Is the final enzyme involved in the recycling/catabolism of glycerophospholipid polar heads. To a lesser extent, is also able to act on glycerol 2-phosphate and D-ribulose 5-phosphate, but cannot use D-glyceraldehyde 3-phosphate, dihydroxyacetone-phosphate, UMP or GMP as substrates. The sequence is that of D-glycerol 3-phosphate phosphatase from Mycobacterium tuberculosis (strain ATCC 25618 / H37Rv).